The chain runs to 181 residues: Small ribosomal subunit protein bS16 (181 aa).

Residues 150-181 form a disordered region; it reads KKAAEEAAKAAAEAPAEEAAPAEEAATEAAAE. Low complexity predominate over residues 158–181; it reads KAAAEAPAEEAAPAEEAATEAAAE.

Belongs to the bacterial ribosomal protein bS16 family.

The polypeptide is Small ribosomal subunit protein bS16 (Bacteroides fragilis (strain ATCC 25285 / DSM 2151 / CCUG 4856 / JCM 11019 / LMG 10263 / NCTC 9343 / Onslow / VPI 2553 / EN-2)).